The primary structure comprises 233 residues: Antilisterial bacteriocin subtilosin biosynthesis protein AlbG (233 aa).

Helical transmembrane passes span 4–24 (STVF…FGWV), 46–66 (GLLA…LHYV), 116–136 (TYVM…FEIV), 145–165 (TPPI…LFYM), and 192–212 (IGWM…LAAI).

It is found in the cell membrane. Its function is as follows. Involved in the production of the bacteriocin subtilosin. The polypeptide is Antilisterial bacteriocin subtilosin biosynthesis protein AlbG (albG) (Bacillus subtilis).